A 454-amino-acid chain; its full sequence is Mitochondrial dynamics protein MID49 (454 aa).

Over M1–D22 the chain is Mitochondrial intermembrane. The chain crosses the membrane as a helical span at residues F23–A43. Over T44–L454 the chain is Cytoplasmic. Positions A76–S119 are disordered. Positions A88–K108 are enriched in low complexity.

Belongs to the MID49/MID51 family. Interacts with DNM1L.

It localises to the mitochondrion outer membrane. Mitochondrial outer membrane protein which regulates mitochondrial organization. It is required for mitochondrial fission and promotes the recruitment and association of the fission mediator dynamin-related protein 1 (DNM1L) to the mitochondrial surface independently of the mitochondrial fission FIS1 and MFF proteins. Regulates DNM1L GTPase activity. The protein is Mitochondrial dynamics protein MID49 (MIEF2) of Pongo abelii (Sumatran orangutan).